Consider the following 59-residue polypeptide: Cecropin-B1 (59 aa).

Positions 1–23 (MNFNKLFLIVILAALLLLGQTEA) are cleaved as a signal peptide. Position 57 is a leucine amide (leucine 57).

Belongs to the cecropin family.

It localises to the secreted. In terms of biological role, cecropins have lytic and antibacterial activity against several Gram-positive and Gram-negative bacteria. The protein is Cecropin-B1 (CECB1) of Culex pipiens pipiens (Northern house mosquito).